The sequence spans 115 residues: Large ribosomal subunit protein bL19 (115 aa).

It belongs to the bacterial ribosomal protein bL19 family.

Functionally, this protein is located at the 30S-50S ribosomal subunit interface and may play a role in the structure and function of the aminoacyl-tRNA binding site. This is Large ribosomal subunit protein bL19 from Leifsonia xyli subsp. xyli (strain CTCB07).